We begin with the raw amino-acid sequence, 188 residues long: Ribosome maturation factor RimM (188 aa).

Residues 93 to 175 enclose the PRC barrel domain; sequence QDEFYFTDLI…EIEVQGDLSD (83 aa).

Belongs to the RimM family. As to quaternary structure, binds ribosomal protein uS19.

It is found in the cytoplasm. In terms of biological role, an accessory protein needed during the final step in the assembly of 30S ribosomal subunit, possibly for assembly of the head region. Essential for efficient processing of 16S rRNA. May be needed both before and after RbfA during the maturation of 16S rRNA. It has affinity for free ribosomal 30S subunits but not for 70S ribosomes. The sequence is that of Ribosome maturation factor RimM from Gluconacetobacter diazotrophicus (strain ATCC 49037 / DSM 5601 / CCUG 37298 / CIP 103539 / LMG 7603 / PAl5).